The sequence spans 805 residues: Arginine/serine-rich protein PNISR (805 aa).

The span at 75-88 shows a compositional bias: polar residues; the sequence is NNHGNFQGDSNFNR. Disordered regions lie at residues 75 to 331 and 382 to 805; these read NNHG…EEKE and LTGL…SRSR. 2 stretches are compositionally biased toward pro residues: residues 100 to 115 and 183 to 194; these read PPHP…PAPG and YWQPGPPGPPAP. The span at 197–210 shows a compositional bias: basic and acidic residues; that stretch reads NRRERPPSFRDRQR. S204 and S211 each carry phosphoserine. A Glycyl lysine isopeptide (Lys-Gly) (interchain with G-Cter in SUMO2) cross-link involves residue K218. The stretch at 237-276 forms a coiled coil; sequence REGLEKMEREKQKKLEKERMEQQRSQLSKKEKKATEDAEG. Basic and acidic residues predominate over residues 238–258; the sequence is EGLEKMEREKQKKLEKERMEQ. Phosphoserine is present on residues S290, S304, S313, and S321. Over residues 290-299 the composition is skewed to acidic residues; the sequence is SDEEDEDAEN. The segment covering 384–393 has biased composition (gly residues); sequence GLGGLGGYGS. Residues 421 to 463 are compositionally biased toward basic and acidic residues; that stretch reads QKQEAFWRKEKEQQLLQDKQIEEEKQQTERVTKEMNEFIHREQ. The stretch at 427–461 forms a coiled coil; that stretch reads WRKEKEQQLLQDKQIEEEKQQTERVTKEMNEFIHR. Residues S465 and S467 each carry the phosphoserine modification. Composition is skewed to basic and acidic residues over residues 473–486 and 494–508; these read EADR…KRTP and EPKR…ERGS. At T485 the chain carries Phosphothreonine. K496 is covalently cross-linked (Glycyl lysine isopeptide (Lys-Gly) (interchain with G-Cter in SUMO2)). The segment covering 509–550 has biased composition (low complexity); sequence RSGSSSSGSSSSGSRTSSSSSSVSSSSYSSSSGSSCTSSRSS. Basic residues-rich tracts occupy residues 551–560, 567–579, 587–598, and 607–639; these read SPKRRKRPSR, KARR…YSRR, TRGKLRDRRRSN, and RRNR…SRDR. Residues 659–721 show a composition bias toward basic and acidic residues; the sequence is EAKEQDRKKE…KRKRESERTF (63 aa). K703 participates in a covalent cross-link: Glycyl lysine isopeptide (Lys-Gly) (interchain with G-Cter in SUMO2). Position 726 is a phosphoserine (S726). The segment covering 732 to 753 has biased composition (basic and acidic residues); that stretch reads IRHDSRQDSKKNATKDSKRHSG. Residues 754–767 are compositionally biased toward low complexity; sequence SDSSGRSSSESPGS. Basic residues-rich tracts occupy residues 771–781 and 789–805; these read KKAKKPKHSRS and RSGK…SRSR.

The protein belongs to the splicing factor SR family. In terms of assembly, interacts with PNN.

Its subcellular location is the nucleus speckle. The sequence is that of Arginine/serine-rich protein PNISR (Pnisr) from Mus musculus (Mouse).